Reading from the N-terminus, the 469-residue chain is 3-isopropylmalate dehydratase large subunit (469 aa).

Residues Cys350, Cys410, and Cys413 each coordinate [4Fe-4S] cluster.

The protein belongs to the aconitase/IPM isomerase family. LeuC type 1 subfamily. Heterodimer of LeuC and LeuD. [4Fe-4S] cluster serves as cofactor.

It catalyses the reaction (2R,3S)-3-isopropylmalate = (2S)-2-isopropylmalate. The protein operates within amino-acid biosynthesis; L-leucine biosynthesis; L-leucine from 3-methyl-2-oxobutanoate: step 2/4. In terms of biological role, catalyzes the isomerization between 2-isopropylmalate and 3-isopropylmalate, via the formation of 2-isopropylmaleate. This Rhizobium rhizogenes (strain K84 / ATCC BAA-868) (Agrobacterium radiobacter) protein is 3-isopropylmalate dehydratase large subunit.